Here is a 109-residue protein sequence, read N- to C-terminus: Spermidine export protein MdtI (109 aa).

A run of 4 helical transmembrane segments spans residues 6-26, 36-56, 64-84, and 88-108; these read FYPIAFLILAVMLEIVANILL, WLGILSLLSVLGAFSALAQAV, AYALWGGFGIAATVAAGWILF, and LNYKGWIGLILLLAGMVMIKL.

It belongs to the drug/metabolite transporter (DMT) superfamily. Small multidrug resistance (SMR) (TC 2.A.7.1) family. MdtI subfamily. In terms of assembly, forms a complex with MdtJ.

Its subcellular location is the cell inner membrane. Functionally, catalyzes the excretion of spermidine. This Yersinia pseudotuberculosis serotype O:1b (strain IP 31758) protein is Spermidine export protein MdtI.